The sequence spans 377 residues: Subtilisin-like protease CPC735_012930 (377 aa).

A signal peptide spans 1–20 (MSILFKIFASTLAVVSVVNA). Positions 21–118 (GELLNFENER…VEPDRMASAT (98 aa)) are excised as a propeptide. The Inhibitor I9 domain occupies 36–114 (SYIVVMKDGT…HVKYVEPDRM (79 aa)). One can recognise a Peptidase S8 domain in the interval 128 to 377 (SWGLGRISHT…NKLLYNKSGF (250 aa)). Residues Asp160 and His191 each act as charge relay system in the active site. A glycan (N-linked (GlcNAc...) asparagine) is linked at Asn252. Ser323 serves as the catalytic Charge relay system. N-linked (GlcNAc...) asparagine glycosylation is found at Asn364 and Asn373.

Belongs to the peptidase S8 family.

Its subcellular location is the secreted. In terms of biological role, secreted subtilisin-like serine protease with keratinolytic activity that contributes to pathogenicity. The sequence is that of Subtilisin-like protease CPC735_012930 from Coccidioides posadasii (strain C735) (Valley fever fungus).